The sequence spans 80 residues: Defensin-like protein 291 (80 aa).

Residues 1-29 (MAASKTTIFIVFVLCLSCTLLVNISGIQA) form the signal peptide. Disulfide bonds link Cys-50–Cys-70, Cys-56–Cys-75, and Cys-62–Cys-77.

It belongs to the DEFL family.

Its subcellular location is the secreted. This Arabidopsis thaliana (Mouse-ear cress) protein is Defensin-like protein 291.